A 282-amino-acid polypeptide reads, in one-letter code: MRVALGVAYNGQRYSGWQSQLSGNTIQDHLEAALGRFAAQEVHTLCAGRTDAGVHGLMQVVHFDTPLDRAPFSWVRGTNTFLPPDIAVQWAQPVPDAFHSRACATARRYAYVLLQSPVRPSVEAGRVGWVFHALDGDAMQAAARHLLGEHDFSSFRASGCQAKSPVKTLHRLSITRRMAGDGAQMAAASSMRPGDAAMECCYWRFEFEGSAFLHHMVRNIMGCLIAIGQGTYAPQWMQQVLDARSRDAAAPTFSPDGLYFLGPVYDPSWGLPSRSPAYDWLP.

Residue Asp51 is the Nucleophile of the active site. Tyr109 serves as a coordination point for substrate.

This sequence belongs to the tRNA pseudouridine synthase TruA family. Homodimer.

It carries out the reaction uridine(38/39/40) in tRNA = pseudouridine(38/39/40) in tRNA. Its function is as follows. Formation of pseudouridine at positions 38, 39 and 40 in the anticodon stem and loop of transfer RNAs. The protein is tRNA pseudouridine synthase A of Delftia acidovorans (strain DSM 14801 / SPH-1).